A 251-amino-acid chain; its full sequence is Triosephosphate isomerase (251 aa).

9-11 (NWK) is a substrate binding site. Histidine 96 functions as the Electrophile in the catalytic mechanism. Residue glutamate 167 is the Proton acceptor of the active site. Residues glycine 173, serine 213, and 234–235 (GG) each bind substrate.

The protein belongs to the triosephosphate isomerase family. In terms of assembly, homodimer.

It is found in the cytoplasm. It carries out the reaction D-glyceraldehyde 3-phosphate = dihydroxyacetone phosphate. It participates in carbohydrate biosynthesis; gluconeogenesis. The protein operates within carbohydrate degradation; glycolysis; D-glyceraldehyde 3-phosphate from glycerone phosphate: step 1/1. In terms of biological role, involved in the gluconeogenesis. Catalyzes stereospecifically the conversion of dihydroxyacetone phosphate (DHAP) to D-glyceraldehyde-3-phosphate (G3P). The protein is Triosephosphate isomerase of Phocaeicola vulgatus (strain ATCC 8482 / DSM 1447 / JCM 5826 / CCUG 4940 / NBRC 14291 / NCTC 11154) (Bacteroides vulgatus).